Reading from the N-terminus, the 727-residue chain is Sodium-dependent neutral amino acid transporter SLC6A17 (727 aa).

At Met-1–Tyr-69 the chain is on the cytoplasmic side. Phosphoserine occurs at positions 13 and 20. Residues Ile-70–Cys-90 traverse the membrane as a helical segment. The Extracellular portion of the chain corresponds to Gln-91–Gly-95. The chain crosses the membrane as a helical span at residues Gly-96–Leu-116. The Cytoplasmic segment spans residues Glu-117 to Cys-147. A helical transmembrane segment spans residues Ile-148–Phe-168. Residues Phe-169 to Gly-222 are Extracellular-facing. Asn-186 carries an N-linked (GlcNAc...) asparagine glycan. The chain crosses the membrane as a helical span at residues Leu-223–Val-243. Over Lys-244 to Met-253 the chain is Cytoplasmic. A helical transmembrane segment spans residues Tyr-254 to Leu-274. Topologically, residues Arg-275–Glu-300 are extracellular. A helical transmembrane segment spans residues Ala-301–Ser-321. Residues Tyr-322 to Ala-334 lie on the Cytoplasmic side of the membrane. The chain crosses the membrane as a helical span at residues Leu-335–Leu-355. At Gly-356 to Val-460 the chain is on the extracellular side. Tyr-377 carries the phosphotyrosine modification. An N-linked (GlcNAc...) asparagine glycan is attached at Asn-393. Residues Met-461 to Ile-481 traverse the membrane as a helical segment. Residues Thr-482 to Lys-490 lie on the Cytoplasmic side of the membrane. Residues Val-491–Phe-511 traverse the membrane as a helical segment. Residues Val-512 to Ser-527 are Extracellular-facing. The chain crosses the membrane as a helical span at residues Ala-528–Gly-548. Over Thr-549–Lys-573 the chain is Cytoplasmic. Residues Phe-574 to Thr-594 form a helical membrane-spanning segment. Topologically, residues Pro-595–Ala-617 are extracellular. Residues Met-618–Leu-638 form a helical membrane-spanning segment. Residues Arg-639–Leu-727 lie on the Cytoplasmic side of the membrane. Phosphoserine occurs at positions 665 and 701. A disordered region spans residues Val-680–Leu-727. Over residues Gly-698–Pro-709 the composition is skewed to polar residues.

Belongs to the sodium:neurotransmitter symporter (SNF) (TC 2.A.22) family.

The protein localises to the cytoplasmic vesicle. Its subcellular location is the secretory vesicle. The protein resides in the synaptic vesicle membrane. It localises to the postsynapse. It is found in the presynapse. It carries out the reaction L-proline(in) + Na(+)(in) = L-proline(out) + Na(+)(out). The catalysed reaction is L-leucine(in) + Na(+)(in) = L-leucine(out) + Na(+)(out). It catalyses the reaction glycine(in) + Na(+)(in) = glycine(out) + Na(+)(out). The enzyme catalyses L-alanine(in) + Na(+)(in) = L-alanine(out) + Na(+)(out). It carries out the reaction L-glutamine(in) + Na(+)(in) = L-glutamine(out) + Na(+)(out). In terms of biological role, synaptic vesicle transporter with apparent selectivity for neutral amino acids. The transport is sodium-coupled but chloride-independent, likely driven by the proton electrochemical gradient generated by vacuolar H(+)-ATPase in an overall electrogenic mechanism. May contribute to the synaptic uptake of neurotransmitter precursors in a process coupled in part to vesicle exocytosis. In Homo sapiens (Human), this protein is Sodium-dependent neutral amino acid transporter SLC6A17.